The following is a 337-amino-acid chain: MMEQGVGANTVPGVTAPGNVYMIQARNPVAPGSKGQPVGMATYLTSRVTESDAGRANLQTPRVVIQNPAEVNATQGPPTALQHPTAVASLQTPPGEIQYSLGTTDLQTQPGGPQNPPTCAPGPMYTSNQFQWNMPFGSSFTFDPKKFIKDEVRTLGAIQILIGLTHIFTAINPSLYRQYSYSAISGYLVWGGIFFIISGSLSVEAEKDRSSCMVHGSVGMNVVSAIVSLAGVLLLLVDLIRNPVIDVKTVSGGLLPFVLLEFCLTCVVSHFGCQATCWNQFVNRTEVPTIVIANPANTPTGPFNATYSTTGHVNVITSSANPTSPTNAAAMVPPVPS.

Residues 101 to 121 (LGTTDLQTQPGGPQNPPTCAP) are disordered. 4 consecutive transmembrane segments (helical) span residues 155–175 (LGAI…NPSL), 183–203 (AISG…SLSV), 220–240 (MNVV…VDLI), and 252–272 (GGLL…SHFG).

The protein belongs to the MS4A family.

It is found in the membrane. The polypeptide is Membrane-spanning 4-domains subfamily A member 18 (MS4A18) (Bos taurus (Bovine)).